The following is a 209-amino-acid chain: Pyroglutamyl-peptidase 1 (209 aa).

Residues E85, C149, and H168 contribute to the active site.

This sequence belongs to the peptidase C15 family. In terms of assembly, monomer.

Its subcellular location is the cytoplasm. It carries out the reaction Release of an N-terminal pyroglutamyl group from a polypeptide, the second amino acid generally not being Pro.. In terms of biological role, removes 5-oxoproline from various penultimate amino acid residues except L-proline. The protein is Pyroglutamyl-peptidase 1 (Pgpep1) of Rattus norvegicus (Rat).